The chain runs to 305 residues: uncharacterized protein (305 aa).

The tract at residues 255-305 is disordered; the sequence is RCHRAGLRSPPRTREPLWSLGPSGGEAAGEAPGGKGPPTPVLPHARRAGAA. Residues 276–288 are compositionally biased toward gly residues; the sequence is PSGGEAAGEAPGG.

This is an uncharacterized protein from Streptomyces fradiae (Streptomyces roseoflavus).